A 1588-amino-acid polypeptide reads, in one-letter code: RB1-inducible coiled-coil protein 1 (1588 aa).

3 positions are modified to phosphoserine: Ser222, Ser229, and Ser237. At Thr238 the chain carries Phosphothreonine. Residues Ser243, Ser253, Ser257, and Ser261 each carry the phosphoserine modification. The Nuclear localization signal signature appears at 565–568 (KPRK). A phosphoserine mark is found at Ser623, Ser646, Ser649, Ser652, Ser733, Ser1087, Ser1366, and Ser1478. A disordered region spans residues 638 to 674 (QKVSTSQASPQSAASPRIESTTGITTTTSPKTPPPLT). The segment covering 643–667 (SQASPQSAASPRIESTTGITTTTSP) has biased composition (low complexity). The FFAT motif lies at 730 to 736 (DFMSAVN). Coiled-coil stretches lie at residues 858–1393 (LKEK…TSSF) and 1440–1479 (SVQE…SQSL).

As to quaternary structure, part of a complex containing ATG13/KIAA0652, ULK1 and RB1CC1. This complex associates with ATG101. Interacts with PTK2/FAK1 and PTK2B/PYK2. Interacts with GABARAP and GABARAPL1. Interacts with ATG16L1; the interaction is required for ULK1 complex-dependent autophagy. Interacts with RNF111, SKI and SMAD7. Interacts with COP1 in the cytoplasm of proliferating cells in response to UV stimulation. Interacts with TP53. Interacts with C9orf72. Interacts with WDR45B. Interacts with ATG13; this interaction is increased in the absence of TMEM39A. Interacts with WIPI2. Interacts with TAX1BP1. Interacts (via phosphorylated FFAT motif) with MOSPD2. Post-translationally, phosphorylation at Ser-733 of the FFAT motif activates interaction with MOSPD2. In terms of tissue distribution, expressed abundantly in heart and testis, and moderately in kidney, liver and skeletal muscles. Very low expression levels in lung and spleen. Colocalizes with RB1 in various tissues.

Its subcellular location is the nucleus. It localises to the cytoplasm. The protein resides in the cytosol. The protein localises to the preautophagosomal structure. It is found in the lysosome. Its function is as follows. Involved in autophagy. Regulates early events but also late events of autophagosome formation through direct interaction with Atg16L1. Required for the formation of the autophagosome-like double-membrane structure that surrounds the Salmonella-containing vacuole (SCV) during S.typhimurium infection and subsequent xenophagy. Involved in repair of DNA damage caused by ionizing radiation, which subsequently improves cell survival by decreasing apoptosis. Inhibits PTK2/FAK1 and PTK2B/PYK2 kinase activity, affecting their downstream signaling pathways. Plays a role as a modulator of TGF-beta-signaling by restricting substrate specificity of RNF111. Functions as a DNA-binding transcription factor. Is a potent regulator of the RB1 pathway through induction of RB1 expression. Plays a crucial role in muscular differentiation. Plays an indispensable role in fetal hematopoiesis and in the regulation of neuronal homeostasis. In Mus musculus (Mouse), this protein is RB1-inducible coiled-coil protein 1.